Here is a 215-residue protein sequence, read N- to C-terminus: MPGEATETVPATEQELPQSQAETGSGTASDSGESVPGIEEQDSTQTTTQKAWLVAAAEIDEEPVGKAKQSRSEKRARKAMSKLGLLQVTGVTRVTIWKSKNILFVITKLDVYKSPASDAYIVFGEAKIQDLSQQAQLAAAEKFRVQGEAVGNIQENTQTPTVQEESEEEEVDETGVEVKDVKLVMSQANVSRAKAVRALKNNSNDIVNAIMELTV.

Positions 1–51 (MPGEATETVPATEQELPQSQAETGSGTASDSGESVPGIEEQDSTQTTTQKA) are disordered. Residues 9–32 (VPATEQELPQSQAETGSGTASDSG) show a composition bias toward polar residues. Phosphoserine occurs at positions 43 and 132. Positions 70 to 135 (SRSEKRARKA…AKIQDLSQQA (66 aa)) constitute an NAC-A/B domain. Position 142 is an N6-acetyllysine; alternate (lysine 142). Residue lysine 142 forms a Glycyl lysine isopeptide (Lys-Gly) (interchain with G-Cter in SUMO2); alternate linkage. Threonine 161 is subject to Phosphothreonine. Phosphoserine occurs at positions 166, 186, 191, and 203. The UBA domain maps to 176–213 (VEVKDVKLVMSQANVSRAKAVRALKNNSNDIVNAIMEL). Threonine 214 carries the post-translational modification Phosphothreonine.

Belongs to the NAC-alpha family. As to quaternary structure, part of the nascent polypeptide-associated complex (NAC), consisting of NACA and BTF3. NAC associates with ribosomes through the BTF3 subunit. Both subunits can contact nascent polypeptide chains. Expressed specifically in testis and skeletal muscle.

Its subcellular location is the cytoplasm. The protein localises to the nucleus. Prevents inappropriate targeting of non-secretory polypeptides to the endoplasmic reticulum (ER). Binds to nascent polypeptide chains as they emerge from the ribosome and blocks their interaction with the signal recognition particle (SRP), which normally targets nascent secretory peptides to the ER. Also reduces the inherent affinity of ribosomes for protein translocation sites in the ER membrane (M sites). In Homo sapiens (Human), this protein is Nascent polypeptide-associated complex subunit alpha-2 (NACA2).